Reading from the N-terminus, the 1357-residue chain is DNA-directed RNA polymerase subunit beta (1357 aa).

The protein belongs to the RNA polymerase beta chain family. The RNAP catalytic core consists of 2 alpha, 1 beta, 1 beta' and 1 omega subunit. When a sigma factor is associated with the core the holoenzyme is formed, which can initiate transcription.

It catalyses the reaction RNA(n) + a ribonucleoside 5'-triphosphate = RNA(n+1) + diphosphate. Functionally, DNA-dependent RNA polymerase catalyzes the transcription of DNA into RNA using the four ribonucleoside triphosphates as substrates. In Nitrosomonas europaea (strain ATCC 19718 / CIP 103999 / KCTC 2705 / NBRC 14298), this protein is DNA-directed RNA polymerase subunit beta.